A 308-amino-acid polypeptide reads, in one-letter code: MPAPTGTDHPDITVTDSLGEHDVARARLMVDGAAAADGISPLSEQAVAAIDAAAGSGVRHVISAAGYANISPGRGDEPAMIEAVVDPQLRRRGHGRALLTTAFGEAERAGDARVWAHGDLPGAQALAASMGLVRRRELLQLRRGLGTGAPALPELIVDDSVRLRTYAGSADDAEILRVNNAAFDWHPEQGGWGAEQIAERVGAAWFDPEGLFLAFDAANPERLLGFHWTKQHDTELGEVYIVGVDPAAQGRGLGRLLTLAGLHHLAATGRSEVNLYVEGDNTAALHTYERLGFGRYAIDVAYGRPEGD.

1D-myo-inositol 2-(L-cysteinylamino)-2-deoxy-alpha-D-glucopyranoside is bound at residue glutamate 44. 83–85 is an acetyl-CoA binding site; sequence AVV. The 148-residue stretch at 161–308 folds into the N-acetyltransferase domain; that stretch reads VRLRTYAGSA…DVAYGRPEGD (148 aa). Glutamate 188, lysine 230, and glutamate 238 together coordinate 1D-myo-inositol 2-(L-cysteinylamino)-2-deoxy-alpha-D-glucopyranoside. Acetyl-CoA is bound by residues 242-244 and 249-255; these read VGV and QGRGLGR. 1D-myo-inositol 2-(L-cysteinylamino)-2-deoxy-alpha-D-glucopyranoside is bound at residue tyrosine 276. Residue 281 to 286 participates in acetyl-CoA binding; that stretch reads NTAALH.

Belongs to the acetyltransferase family. MshD subfamily. As to quaternary structure, monomer.

It catalyses the reaction 1D-myo-inositol 2-(L-cysteinylamino)-2-deoxy-alpha-D-glucopyranoside + acetyl-CoA = mycothiol + CoA + H(+). Its function is as follows. Catalyzes the transfer of acetyl from acetyl-CoA to desacetylmycothiol (Cys-GlcN-Ins) to form mycothiol. The polypeptide is Mycothiol acetyltransferase (Gordonia bronchialis (strain ATCC 25592 / DSM 43247 / BCRC 13721 / JCM 3198 / KCTC 3076 / NBRC 16047 / NCTC 10667) (Rhodococcus bronchialis)).